A 370-amino-acid polypeptide reads, in one-letter code: tRNA-specific 2-thiouridylase MnmA (370 aa).

Residues 19–26 and Leu45 each bind ATP; that span reads AMSGGVDS. The active-site Nucleophile is the Cys113. The cysteines at positions 113 and 209 are disulfide-linked. Position 137 (Gly137) interacts with ATP. Positions 159-161 are interaction with tRNA; that stretch reads RDQ. Cys209 (cysteine persulfide intermediate) is an active-site residue.

The protein belongs to the MnmA/TRMU family.

The protein localises to the cytoplasm. It catalyses the reaction S-sulfanyl-L-cysteinyl-[protein] + uridine(34) in tRNA + AH2 + ATP = 2-thiouridine(34) in tRNA + L-cysteinyl-[protein] + A + AMP + diphosphate + H(+). In terms of biological role, catalyzes the 2-thiolation of uridine at the wobble position (U34) of tRNA, leading to the formation of s(2)U34. The sequence is that of tRNA-specific 2-thiouridylase MnmA from Zymomonas mobilis subsp. mobilis (strain ATCC 31821 / ZM4 / CP4).